Reading from the N-terminus, the 360-residue chain is Cyclin-D1-binding protein 1 (360 aa).

At A2 the chain carries N-acetylalanine. Interaction with TCF3 stretches follow at residues 2–184 (ASAT…VDFV) and 150–360 (ISYN…ELEL). Interaction with RPLP0 stretches follow at residues 2 to 190 (ASAT…AHEE) and 240 to 360 (LIIP…ELEL). Positions 2–208 (ASATAPAAAV…DPYSGLLNDT (207 aa)) are required for interaction with CCND1.

This sequence belongs to the CCNDBP1 family. Interacts with CCND1 and GRAP2. May also interact with COPS5, RPLP0, SIRT6, SYF2 and TCF3. Post-translationally, phosphorylated. In terms of tissue distribution, ubiquitously expressed. Expression is down-regulated in a variety of tumor types including breast, colon, prostate and rectal tumors, and is up-regulated in certain hepatic carcinomas.

The protein localises to the cytoplasm. The protein resides in the nucleus. Functionally, may negatively regulate cell cycle progression. May act at least in part via inhibition of the cyclin-D1/CDK4 complex, thereby preventing phosphorylation of RB1 and blocking E2F-dependent transcription. The polypeptide is Cyclin-D1-binding protein 1 (CCNDBP1) (Homo sapiens (Human)).